Reading from the N-terminus, the 98-residue chain is MHFRTVNTPARLQFISRFVLQPLRPLLHYKDHTIRTAAEAGLDVAELAVGPAFVVARGYFTLRQADTSSAESRDPTKQQQLWEKTLEWLGMTEEQGAL.

Its pathway is secondary metabolite biosynthesis. In terms of biological role, dehydrogenase; part of the gene cluster that mediates the biosynthesis of aculins. The pathway begins with the synthesis of 6-methylsalicylic acid by the polyketide synthase (PKS) acuA via condensation of acetate and malonate units. The 6-methylsalicylic acid decarboxylase acuB then catalyzes the decarboxylation of 6-methylsalicylic acid to yield m-cresol (also known as 3-methylphenol). These first reactions occur in the cytosol. The intermediate m-cresol is then transported into the endoplasmic reticulum where the cytochrome P450 monooxygenase acuC converts it to m-hydroxybenzyl alcohol, which is further converted to gentisyl alcohol by the cytochrome P450 monooxygenase acuD. Gentisyl alcohol is further oxidized by the oxidoreductase acuE that probably catalyzes hydroxylation of the aromatic ring. The aromatic system might then be opened by oxidation through a Baeyer-Villiger type of oxidation, which could be catalyzed by acuF, with the carboxylic acid at C-1 subsequently reduced to an aldehyde by acuG. Subsequently, a hemiacetal is formed, before the dehydrogenase acuH would reduce the double bond between C-4 and C-6. Finally, keto-enol tautomerism results in formation of aculinic acid, which exists as two diastereomers (both R/S configurations at C-1) by non-enzymatic hemiacetal formation. The carboxypeptidase acuI could be involved in the linking of aculinic acid to an aculene A moiety produced by the aculene biosynthesis cluster and which leads to the production of aculin A. AcuI may also be involved in the attachment of proline to aculinic acid to form epi-aculins A and B. The sequence is that of Dehydrogenase acuH from Aspergillus aculeatus (strain ATCC 16872 / CBS 172.66 / WB 5094).